The primary structure comprises 330 residues: Palmitoyltransferase SWF1 (330 aa).

A helical transmembrane segment spans residues 1-21; it reads MLLFLVFILVVSQVVLLLLSP. Topologically, residues 22–50 are cytoplasmic; the sequence is QFRDKFIFRWYYDEVYKPMILDNSRYRIK. The chain crosses the membrane as a helical span at residues 51–71; sequence FYVVPVFYLSVYSYMVYIFYS. At 72 to 86 the chain is on the lumenal side; sequence RTFAIISPMLTSIET. A helical transmembrane segment spans residues 87 to 107; it reads YVVIPLMLILPLFFGSMSMII. Residues 108 to 181 lie on the Cytoplasmic side of the membrane; sequence KPDSSNAHQI…GMGNYMYFYS (74 aa). In terms of domain architecture, DHHC spans 134–184; sequence HECRTCKQVKPARSKHCTVCNSCIYLADHHCVWINNCVGMGNYMYFYSFLC. Residues 182-202 form a helical membrane-spanning segment; it reads FLCSNLLLLSYSFIRLIFIQF. The Lumenal portion of the chain corresponds to 203 to 218; it reads NKSAYNTTPTGEKSLL. The chain crosses the membrane as a helical span at residues 219 to 239; the sequence is ILSILCGSFTVILAVYCYFVF. At 240–330 the chain is on the cytoplasmic side; it reads ELVNSGMTTN…FINNLREFIG (91 aa).

It belongs to the DHHC palmitoyltransferase family. SWF1 subfamily.

It localises to the endoplasmic reticulum membrane. The catalysed reaction is L-cysteinyl-[protein] + hexadecanoyl-CoA = S-hexadecanoyl-L-cysteinyl-[protein] + CoA. In terms of biological role, palmitoyltransferase that targets several endosomal SNAREs. Palmitoylates the SNAREs at cysteine residues close to the cytoplasmic end of their transmembrane domain. May have a role in the cellular quality control of transmembrane domain-containing proteins. In Candida glabrata (strain ATCC 2001 / BCRC 20586 / JCM 3761 / NBRC 0622 / NRRL Y-65 / CBS 138) (Yeast), this protein is Palmitoyltransferase SWF1 (SWF1).